The sequence spans 436 residues: Histidinol dehydrogenase (436 aa).

Positions 130, 191, and 214 each coordinate NAD(+). 3 residues coordinate substrate: Ser237, Gln259, and His262. Zn(2+)-binding residues include Gln259 and His262. Active-site proton acceptor residues include Glu327 and His328. Residues His328, Asp361, Glu415, and His420 each coordinate substrate. Asp361 contacts Zn(2+). His420 lines the Zn(2+) pocket.

It belongs to the histidinol dehydrogenase family. It depends on Zn(2+) as a cofactor.

It carries out the reaction L-histidinol + 2 NAD(+) + H2O = L-histidine + 2 NADH + 3 H(+). It functions in the pathway amino-acid biosynthesis; L-histidine biosynthesis; L-histidine from 5-phospho-alpha-D-ribose 1-diphosphate: step 9/9. In terms of biological role, catalyzes the sequential NAD-dependent oxidations of L-histidinol to L-histidinaldehyde and then to L-histidine. This is Histidinol dehydrogenase from Geobacter metallireducens (strain ATCC 53774 / DSM 7210 / GS-15).